Here is a 62-residue protein sequence, read N- to C-terminus: Agnoprotein (62 aa).

Over 1 to 23 (MVLRRLSRQASVKVRRSWTESKK) the chain is Cytoplasmic. Residues 24–40 (TAQRLFVFVLELLLQFC) form a helical; Signal-anchor for type II membrane protein membrane-spanning segment. The Extracellular segment spans residues 41 to 62 (EGEDTVDGKRKKPERLTEKPES).

Belongs to the polyomaviruses agnoprotein family. As to quaternary structure, homooligomer. Interacts with VP1. Interacts with large T antigen; this interaction may impact upon the activity of T-antigen on the control of viral gene transcription and replication. Interacts with small t antigen. Interacts with host CBX5; this interaction induces the dissociation of CBX5 from LBR, resulting in destabilization of the nuclear envelope. Phosphorylated by host kinase. Phosphorylation segregates agnoprotein in cytoplasm, whereas unphosphorylated agnoprotein migrate to the nucleus.

The protein resides in the host cytoplasm. The protein localises to the host nucleus membrane. It localises to the host rough endoplasmic reticulum membrane. It is found in the host cell membrane. Its function is as follows. Alters the structure of the nuclear envelope by interacting with host CBX5 and disrupting CBX5 association with LBR. Involved in the perinuclear-nuclear localization of the capsid protein VP1 during virion assembly and maturation. Plays an important role in the release of progeny virions from infected cells and in viral propagation, probably by acting as a viral ionic channel in the host plasma membrane. Allows influx of extracellular calcium ions in the host cell. May contribute to viral genome transcription and translation of viral late proteins. In Simian virus 40 (SV40), this protein is Agnoprotein.